The primary structure comprises 188 residues: Inner membrane-spanning protein YciB (188 aa).

The next 5 membrane-spanning stretches (helical) occupy residues 23 to 43 (FQKATWVLVAASAAALAIGYA), 49 to 69 (AMLPLFFGGMALVFGTLGLIF), 73 to 93 (VFVKIKVTVINLALASFLVGG), 116 to 133 (WRTLTLRYGAYFAFVAII), and 149 to 169 (FRLALLPVALVFVATQLPFMM).

This sequence belongs to the YciB family.

It is found in the cell inner membrane. In terms of biological role, plays a role in cell envelope biogenesis, maintenance of cell envelope integrity and membrane homeostasis. The protein is Inner membrane-spanning protein YciB of Caulobacter vibrioides (strain ATCC 19089 / CIP 103742 / CB 15) (Caulobacter crescentus).